Consider the following 183-residue polypeptide: Adenine phosphoribosyltransferase (183 aa).

It belongs to the purine/pyrimidine phosphoribosyltransferase family. Homodimer.

The protein resides in the cytoplasm. It carries out the reaction AMP + diphosphate = 5-phospho-alpha-D-ribose 1-diphosphate + adenine. It participates in purine metabolism; AMP biosynthesis via salvage pathway; AMP from adenine: step 1/1. Catalyzes a salvage reaction resulting in the formation of AMP, that is energically less costly than de novo synthesis. The polypeptide is Adenine phosphoribosyltransferase (Salmonella arizonae (strain ATCC BAA-731 / CDC346-86 / RSK2980)).